The primary structure comprises 658 residues: Glycogen debranching enzyme (658 aa).

Asp336 serves as the catalytic Nucleophile. Glu371 serves as the catalytic Proton donor. Residues 459 to 484 form a disordered region; sequence EANGEENRDGTNSNYSDNHGKEGLGG.

It belongs to the glycosyl hydrolase 13 family.

It carries out the reaction Hydrolysis of (1-&gt;6)-alpha-D-glucosidic linkages to branches with degrees of polymerization of three or four glucose residues in limit dextrin.. The protein operates within glycan degradation; glycogen degradation. Functionally, removes maltotriose and maltotetraose chains that are attached by 1,6-alpha-linkage to the limit dextrin main chain, generating a debranched limit dextrin. The sequence is that of Glycogen debranching enzyme from Salmonella paratyphi B (strain ATCC BAA-1250 / SPB7).